We begin with the raw amino-acid sequence, 226 residues long: PKHD-type hydroxylase Plav_0377 (226 aa).

In terms of domain architecture, Fe2OG dioxygenase spans 78 to 178 (KVLPPRFNRY…RLASFFWVQS (101 aa)). Fe cation is bound by residues histidine 96, aspartate 98, and histidine 159. A 2-oxoglutarate-binding site is contributed by arginine 169.

It depends on Fe(2+) as a cofactor. L-ascorbate is required as a cofactor.

The chain is PKHD-type hydroxylase Plav_0377 from Parvibaculum lavamentivorans (strain DS-1 / DSM 13023 / NCIMB 13966).